The chain runs to 451 residues: Arginine biosynthesis bifunctional protein ArgJ, mitochondrial (451 aa).

Residues Thr-180, Lys-209, Thr-220, Glu-307, Asn-446, and Thr-451 each coordinate substrate. The active-site Nucleophile is the Thr-220.

The protein belongs to the ArgJ family. As to quaternary structure, heterodimer of an alpha and a beta chain. In terms of processing, the alpha and beta chains are autoproteolytically processed from a single precursor protein within the mitochondrion.

The protein localises to the mitochondrion matrix. It catalyses the reaction N(2)-acetyl-L-ornithine + L-glutamate = N-acetyl-L-glutamate + L-ornithine. It carries out the reaction L-glutamate + acetyl-CoA = N-acetyl-L-glutamate + CoA + H(+). The protein operates within amino-acid biosynthesis; L-arginine biosynthesis; L-ornithine and N-acetyl-L-glutamate from L-glutamate and N(2)-acetyl-L-ornithine (cyclic): step 1/1. It functions in the pathway amino-acid biosynthesis; L-arginine biosynthesis; N(2)-acetyl-L-ornithine from L-glutamate: step 1/4. Functionally, catalyzes two activities which are involved in the cyclic version of arginine biosynthesis: the synthesis of acetylglutamate from glutamate and acetyl-CoA, and of ornithine by transacetylation between acetylornithine and glutamate. The protein is Arginine biosynthesis bifunctional protein ArgJ, mitochondrial of Fusarium vanettenii (strain ATCC MYA-4622 / CBS 123669 / FGSC 9596 / NRRL 45880 / 77-13-4) (Fusarium solani subsp. pisi).